The chain runs to 105 residues: Putative zinc finger protein 861 (105 aa).

The C2H2-type zinc-finger motif lies at 75–97; the sequence is YTCKPCGNAFRFHHSFHIHERPH.

The polypeptide is Putative zinc finger protein 861 (ZNF861P) (Homo sapiens (Human)).